The sequence spans 170 residues: Ankyrin repeat-containing protein C105.02c (170 aa).

ANK repeat units follow at residues 46 to 76 (LGND…NLNN) and 81 to 116 (TGDT…DPLL). The segment at 150–170 (SADVVADDDDEEEGSGESDEE) is disordered. Residues 154 to 170 (VADDDDEEEGSGESDEE) are compositionally biased toward acidic residues.

Its subcellular location is the cytoplasm. The protein localises to the nucleus. This chain is Ankyrin repeat-containing protein C105.02c, found in Schizosaccharomyces pombe (strain 972 / ATCC 24843) (Fission yeast).